A 379-amino-acid chain; its full sequence is Queuine tRNA-ribosyltransferase (379 aa).

Aspartate 94 acts as the Proton acceptor in catalysis. Substrate contacts are provided by residues aspartate 94–phenylalanine 98, aspartate 148, glutamine 191, and glycine 218. The segment at glycine 249 to serine 255 is RNA binding. The active-site Nucleophile is the aspartate 268. Residues threonine 273–arginine 277 are RNA binding; important for wobble base 34 recognition. The Zn(2+) site is built by cysteine 306, cysteine 308, cysteine 311, and histidine 337.

The protein belongs to the queuine tRNA-ribosyltransferase family. Homodimer. Within each dimer, one monomer is responsible for RNA recognition and catalysis, while the other monomer binds to the replacement base PreQ1. It depends on Zn(2+) as a cofactor.

It carries out the reaction 7-aminomethyl-7-carbaguanine + guanosine(34) in tRNA = 7-aminomethyl-7-carbaguanosine(34) in tRNA + guanine. The protein operates within tRNA modification; tRNA-queuosine biosynthesis. In terms of biological role, catalyzes the base-exchange of a guanine (G) residue with the queuine precursor 7-aminomethyl-7-deazaguanine (PreQ1) at position 34 (anticodon wobble position) in tRNAs with GU(N) anticodons (tRNA-Asp, -Asn, -His and -Tyr). Catalysis occurs through a double-displacement mechanism. The nucleophile active site attacks the C1' of nucleotide 34 to detach the guanine base from the RNA, forming a covalent enzyme-RNA intermediate. The proton acceptor active site deprotonates the incoming PreQ1, allowing a nucleophilic attack on the C1' of the ribose to form the product. After dissociation, two additional enzymatic reactions on the tRNA convert PreQ1 to queuine (Q), resulting in the hypermodified nucleoside queuosine (7-(((4,5-cis-dihydroxy-2-cyclopenten-1-yl)amino)methyl)-7-deazaguanosine). In Bacillus cereus (strain Q1), this protein is Queuine tRNA-ribosyltransferase.